The following is a 209-amino-acid chain: Uracil phosphoribosyltransferase (209 aa).

5-phospho-alpha-D-ribose 1-diphosphate is bound by residues Arg-79, Arg-104, and 131–139 (DPMLATGGS). Residues Ile-194 and 199 to 201 (GDA) contribute to the uracil site. Asp-200 contributes to the 5-phospho-alpha-D-ribose 1-diphosphate binding site.

It belongs to the UPRTase family. The cofactor is Mg(2+).

It catalyses the reaction UMP + diphosphate = 5-phospho-alpha-D-ribose 1-diphosphate + uracil. It functions in the pathway pyrimidine metabolism; UMP biosynthesis via salvage pathway; UMP from uracil: step 1/1. Allosterically activated by GTP. Its function is as follows. Catalyzes the conversion of uracil and 5-phospho-alpha-D-ribose 1-diphosphate (PRPP) to UMP and diphosphate. This chain is Uracil phosphoribosyltransferase, found in Streptococcus suis (strain 05ZYH33).